A 58-amino-acid chain; its full sequence is Weak neurotoxin D2B (58 aa).

Disulfide bonds link C3–C24, C17–C41, and C43–C54.

As to expression, expressed by the venom gland.

The protein resides in the secreted. Its function is as follows. Binds to muscle nicotinic acetylcholine receptor (nAChR) and inhibit acetylcholine from binding to the receptor, thereby impairing neuromuscular transmission. In Micrurus pyrrhocryptus (Coral snake), this protein is Weak neurotoxin D2B.